Consider the following 282-residue polypeptide: UDP-3-O-acyl-N-acetylglucosamine deacetylase (282 aa).

H81, H239, and D243 together coordinate Zn(2+). H266 serves as the catalytic Proton donor.

Belongs to the LpxC family. It depends on Zn(2+) as a cofactor.

It carries out the reaction a UDP-3-O-[(3R)-3-hydroxyacyl]-N-acetyl-alpha-D-glucosamine + H2O = a UDP-3-O-[(3R)-3-hydroxyacyl]-alpha-D-glucosamine + acetate. The protein operates within glycolipid biosynthesis; lipid IV(A) biosynthesis; lipid IV(A) from (3R)-3-hydroxytetradecanoyl-[acyl-carrier-protein] and UDP-N-acetyl-alpha-D-glucosamine: step 2/6. Its function is as follows. Catalyzes the hydrolysis of UDP-3-O-myristoyl-N-acetylglucosamine to form UDP-3-O-myristoylglucosamine and acetate, the committed step in lipid A biosynthesis. This chain is UDP-3-O-acyl-N-acetylglucosamine deacetylase, found in Chlamydia pneumoniae (Chlamydophila pneumoniae).